The chain runs to 394 residues: MSKEKFKRIKPHINVGTIGHVDHGKTTLTAAITTVLSKKYGGYARAFDQIDNAPEEKARGITINTSHVEYDTAYRHYAHVDCPGHADYIKNMITGAAQMDGAILVVAATDGPMPQTREHILLARQVGVPHIIVFMNKCDMVNDEELLELVEMEMRELLSQYDFPGDNTPIIRGSALKALENDEIWSNKILELSDALDNYIPEPKRVVDQPFLLPIEDVFSISGRGTVVTGRIERGVIRVGEEIEIVGIKDTIKTTCTGVEMFRKLLDEGRAGENVGVLLRGTKRDEVERGQVLSKPGYIKPHSHFESEVYILNKDEGGRHTPFFKGYRPQFYFRTTDITGTIELPEGADMVMPGDNIRMIVHLIAPIAMDDGLRFAIREGGRTIGAGIVSKIIS.

One can recognise a tr-type G domain in the interval 10–204; sequence KPHINVGTIG…ALDNYIPEPK (195 aa). The interval 19-26 is G1; the sequence is GHVDHGKT. Residue 19-26 coordinates GTP; that stretch reads GHVDHGKT. T26 contributes to the Mg(2+) binding site. The segment at 60-64 is G2; sequence GITIN. The interval 81-84 is G3; sequence DCPG. Residues 81-85 and 136-139 each bind GTP; these read DCPGH and NKCD. The G4 stretch occupies residues 136–139; it reads NKCD. A G5 region spans residues 174–176; it reads SAL.

It belongs to the TRAFAC class translation factor GTPase superfamily. Classic translation factor GTPase family. EF-Tu/EF-1A subfamily. As to quaternary structure, monomer.

It localises to the cytoplasm. The enzyme catalyses GTP + H2O = GDP + phosphate + H(+). GTP hydrolase that promotes the GTP-dependent binding of aminoacyl-tRNA to the A-site of ribosomes during protein biosynthesis. This Blochmanniella pennsylvanica (strain BPEN) protein is Elongation factor Tu.